We begin with the raw amino-acid sequence, 147 residues long: Methylglyoxal synthase (147 aa).

The MGS-like domain occupies 4-147 (VSVPATKRIA…LLNFELLCES (144 aa)). Residues histidine 17, lysine 21, 43 to 46 (TGTT), and 63 to 64 (SG) each bind substrate. The active-site Proton donor/acceptor is aspartate 69. Histidine 96 provides a ligand contact to substrate.

It belongs to the methylglyoxal synthase family.

It carries out the reaction dihydroxyacetone phosphate = methylglyoxal + phosphate. In terms of biological role, catalyzes the formation of methylglyoxal from dihydroxyacetone phosphate. The polypeptide is Methylglyoxal synthase (Leptospira borgpetersenii serovar Hardjo-bovis (strain JB197)).